Consider the following 32-residue polypeptide: Conotoxin sr7a (32 aa).

3 disulfide bridges follow: C1–C17, C8–C21, and C16–C31. S32 is modified (serine amide).

Expressed by the venom duct.

Its subcellular location is the secreted. Its function is as follows. Elicits hyperactivity when injected intracranially into mice and produces paralysis when injected into the pedal muscle of freshwater snails, Pomacea paludosa, but it has no apparent effect after intramuscular injection into the limpet Patella opea or the freshwater fish Lebistes reticulatus. The chain is Conotoxin sr7a from Conus spurius (Alphabet cone).